The following is a 59-amino-acid chain: Large ribosomal subunit protein uL30 (59 aa).

Belongs to the universal ribosomal protein uL30 family. Part of the 50S ribosomal subunit.

The protein is Large ribosomal subunit protein uL30 of Alteromonas mediterranea (strain DSM 17117 / CIP 110805 / LMG 28347 / Deep ecotype).